The chain runs to 418 residues: Putative competence-damage inducible protein (418 aa).

Belongs to the CinA family.

In Streptococcus pneumoniae (strain JJA), this protein is Putative competence-damage inducible protein.